We begin with the raw amino-acid sequence, 374 residues long: Speckle-type POZ protein (374 aa).

Residues 31–161 enclose the MATH domain; sequence KFSYMWTINN…DDKLTLFCEV (131 aa). The required for nuclear localization stretch occupies residues 71-191; the sequence is VNPKGLDEES…PDCRLADELG (121 aa). The BTB domain maps to 173–297; it reads QNTMNMVKVP…MCEDALCTSL (125 aa). The tract at residues 297-355 is homodimerization; sequence LSVENAAEILILADLHSADQLKTQAVDFINYHASDVMETSGWKSMVASHPHLVAEAYRS.

It belongs to the Tdpoz family. As to quaternary structure, homodimer. Part of cullin-RING-based BCR (BTB-CUL3-RBX1) E3 ubiquitin-protein ligase complexes that contain CUL3 and SPOP, plus a target protein.

It localises to the nucleus. The protein resides in the nucleus speckle. It functions in the pathway protein modification; protein ubiquitination. Functionally, component of a cullin-RING-based BCR (BTB-CUL3-RBX1) E3 ubiquitin-protein ligase complex that mediates the ubiquitination of target proteins, leading most often to their proteasomal degradation. This is Speckle-type POZ protein (spop) from Danio rerio (Zebrafish).